The sequence spans 365 residues: Probable galacturonosyltransferase-like 10 (365 aa).

Over 1–10 (MMSGSRLASR) the chain is Cytoplasmic. A helical; Signal-anchor for type II membrane protein transmembrane segment spans residues 11-31 (LIIIFSIISTSFFTVESIRLF). The Lumenal segment spans residues 32-365 (PDSFDDASSD…LQYNQELEIL (334 aa)). The N-linked (GlcNAc...) asparagine glycan is linked to Asn-209.

It belongs to the glycosyltransferase 8 family.

The protein resides in the golgi apparatus membrane. It functions in the pathway glycan metabolism; pectin biosynthesis. Its function is as follows. May be involved in pectin and/or xylans biosynthesis in cell walls. The polypeptide is Probable galacturonosyltransferase-like 10 (GATL10) (Arabidopsis thaliana (Mouse-ear cress)).